Here is a 963-residue protein sequence, read N- to C-terminus: Importin-13 (963 aa).

20 HEAT repeats span residues 24–54, 56–88, 95–135, 142–179, 194–231, 236–268, 276–325, 330–372, 375–438, 440–476, 487–522, 524–558, 562–600, 603–648, 676–716, 720–754, 761–803, 815–845, 860–893, and 897–931; these read ENVE…QAQV, PQAW…KISR, TDQY…LSMM, AVAD…EFQT, LAVE…SWVQ, LQDC…NAIS, VNTL…ALLD, WQSF…DDIL, EAEK…YEML, AELL…FQSI, VVPG…WLAD, PVMI…CREC, LPPY…LLSA, VEEN…SNLF, PVVV…VKTL, FAPM…VHIF, FPPI…ALKR, VKAV…TELL, EDGR…FALN, and FSLL…QQIL. One can recognise an Importin N-terminal domain in the interval 45–111; that stretch reads AQKWLMQAQV…KAHSFTQITR (67 aa).

The protein belongs to the importin beta family. Interacts with UBC9, RAN, RBM8A, eIF-1A and PAX6. Expressed in fetal brain, heart, intestine and kidney.

Its subcellular location is the cytoplasm. The protein resides in the nucleus. Functions in nuclear protein import as nuclear transport receptor. Serves as receptor for nuclear localization signals (NLS) in cargo substrates. Is thought to mediate docking of the importin/substrate complex to the nuclear pore complex (NPC) through binding to nucleoporin and the complex is subsequently translocated through the pore by an energy requiring, Ran-dependent mechanism. At the nucleoplasmic side of the NPC, Ran binds to the importin, the importin/substrate complex dissociates and importin is re-exported from the nucleus to the cytoplasm where GTP hydrolysis releases Ran. The directionality of nuclear import is thought to be conferred by an asymmetric distribution of the GTP- and GDP-bound forms of Ran between the cytoplasm and nucleus. Mediates the nuclear import of UBC9, the RBM8A/MAGOH complex, PAX6 and probably other members of the paired homeobox family. Also mediates nuclear export of eIF-1A, and the cytoplasmic release of eIF-1A is triggered by the loading of import substrates onto IPO13. This is Importin-13 (Ipo13) from Rattus norvegicus (Rat).